We begin with the raw amino-acid sequence, 130 residues long: Secreted RxLR effector protein 66 (130 aa).

Positions 1–21 (MHLRLLMSTVITATLIVSNNA) are cleaved as a signal peptide. A RxLR-dEER motif is present at residues 32-62 (RALRGASTVGIAADNLLAAHFSPTLKHKESR). The chain crosses the membrane as a helical span at residues 104–124 (GPAIAIFAGVAATFILIDYLI).

Belongs to the RxLR effector family.

Its subcellular location is the secreted. The protein resides in the host cytoplasm. It localises to the host nucleus. The protein localises to the membrane. Functionally, effector that acts as a broad suppressor of cell death to interrupt plant immunity. Inhibits cell death induced by cell death-inducing proteins, including the PAMP elicitor INF1 from P.infestans. The sequence is that of Secreted RxLR effector protein 66 from Plasmopara viticola (Downy mildew of grapevine).